The primary structure comprises 760 residues: Cyclin-D-binding Myb-like transcription factor 1 (760 aa).

An interaction with CCND2 region spans residues 1-237 (MSTVEEDSDT…TPEEIEKLKE (237 aa)). The interval 24 to 63 (DTDGNLILHCPQNDPDEIDSEDSTEPPHKRLCLSSEDDQS) is disordered. Positions 37-47 (DPDEIDSEDST) are enriched in acidic residues. The segment at 87 to 170 (VTMTATTEVA…IDILMNNIER (84 aa)) is required for transcriptional activation. The interval 87 to 458 (VTMTATTEVA…DNTAISPSPM (372 aa)) is required for DNA-binding. The interaction with CCND1, CCND2 and CCND3 stretch occupies residues 176–690 (GIKDATEIIF…PTIVHQVHQT (515 aa)). Residues 225–263 (GKYTPEEIEKLKELRIKHGNDWATIGAALGRSASSVKDR) form the Myb-like 1 domain. Positions 268–333 (KDTCNTGKWT…KWLNYLNWKQ (66 aa)) constitute an HTH myb-type domain. The H-T-H motif DNA-binding region spans 306-329 (WAAVAERVGTRSEKQCRSKWLNYL). Residues 339–388 (WTKEDEINLILRIAELDVADENDINWDLLAEGWSSVRSPQWLRSKWWTIK) form the Myb-like 2 domain. The tract at residues 459–760 (AALQIPVQIT…KDVEDLVNCH (302 aa)) is required for transcriptional activation. Disordered regions lie at residues 593–614 (DSDLHSSDFPEPPDALEADTFP) and 738–760 (IGSSLGSPVSEDSKDVEDLVNCH).

Belongs to the DMTF1 family. Interacts with the D-type cyclins CCND1, CCND2 and CCND3. Interaction with D-type cyclins may modulate transcriptional activation by this protein. In terms of processing, phosphorylated by the cyclin-D2/CDK4, cyclin-D3/CDK4 and cyclin-D2/CDK6 complexes and to a lesser extent by the cyclin-D1/CDK4 complex.

The protein localises to the nucleus. In terms of biological role, transcriptional activator which activates the CDKN2A/ARF locus in response to Ras-Raf signaling, thereby promoting p53/TP53-dependent growth arrest. Binds to the consensus sequence 5'-CCCG[GT]ATGT-3'. This is Cyclin-D-binding Myb-like transcription factor 1 (Dmtf1) from Rattus norvegicus (Rat).